The following is a 487-amino-acid chain: Inosine-5'-monophosphate dehydrogenase (487 aa).

2 consecutive CBS domains span residues 93–149 and 153–214; these read IVSD…NKTV and MTPK…CKDE. Residues Asp248, 248–250, and 298–300 each bind NAD(+); these read DSS and GIG. K(+)-binding residues include Gly300 and Gly302. IMP is bound at residue Ser303. Residue Cys305 participates in K(+) binding. The Thioimidate intermediate role is filled by Cys305. IMP is bound by residues 338–340, 361–362, and 385–389; these read DGG, GS, and YRGMG. Residue Arg401 is the Proton acceptor of the active site. Residue Glu415 coordinates IMP. K(+)-binding residues include Glu469, Ser470, and His471.

This sequence belongs to the IMPDH/GMPR family. As to quaternary structure, homotetramer. It depends on K(+) as a cofactor.

It catalyses the reaction IMP + NAD(+) + H2O = XMP + NADH + H(+). It participates in purine metabolism; XMP biosynthesis via de novo pathway; XMP from IMP: step 1/1. Its activity is regulated as follows. Mycophenolic acid (MPA) is a non-competitive inhibitor that prevents formation of the closed enzyme conformation by binding to the same site as the amobile flap. In contrast, mizoribine monophosphate (MZP) is a competitive inhibitor that induces the closed conformation. MPA is a potent inhibitor of mammalian IMPDHs but a poor inhibitor of the bacterial enzymes. MZP is a more potent inhibitor of bacterial IMPDH. Functionally, catalyzes the conversion of inosine 5'-phosphate (IMP) to xanthosine 5'-phosphate (XMP), the first committed and rate-limiting step in the de novo synthesis of guanine nucleotides, and therefore plays an important role in the regulation of cell growth. The polypeptide is Inosine-5'-monophosphate dehydrogenase (Pasteurella multocida (strain Pm70)).